Consider the following 155-residue polypeptide: MAKGEGNVLAQHKKARHDYHIVETIEAGIVLTGTEIKSVRAARIQLKDGFAQIKNGEAWLVNVHIAPFEQGNIWNADPERTRKLLLKKREIQHLADELKGTGMTLVPLKVYLKDGFAKVLIGLAKGKHDYDKRESIKRREQDRDIRRVMKSVNRR.

Belongs to the SmpB family.

Its subcellular location is the cytoplasm. In terms of biological role, required for rescue of stalled ribosomes mediated by trans-translation. Binds to transfer-messenger RNA (tmRNA), required for stable association of tmRNA with ribosomes. tmRNA and SmpB together mimic tRNA shape, replacing the anticodon stem-loop with SmpB. tmRNA is encoded by the ssrA gene; the 2 termini fold to resemble tRNA(Ala) and it encodes a 'tag peptide', a short internal open reading frame. During trans-translation Ala-aminoacylated tmRNA acts like a tRNA, entering the A-site of stalled ribosomes, displacing the stalled mRNA. The ribosome then switches to translate the ORF on the tmRNA; the nascent peptide is terminated with the 'tag peptide' encoded by the tmRNA and targeted for degradation. The ribosome is freed to recommence translation, which seems to be the essential function of trans-translation. The protein is SsrA-binding protein of Streptococcus equi subsp. zooepidemicus (strain MGCS10565).